Reading from the N-terminus, the 506-residue chain is Pleckstrin homology domain-containing family D member 1 (506 aa).

A PH domain is found at 28 to 136; sequence KVQLYGVLWK…WLEMLQESGK (109 aa). Residues 146 to 391 adopt a coiled-coil conformation; it reads EAMIKSLEAQ…KVRNKEKEER (246 aa). An Omega-N-methylarginine modification is found at Arg-503.

It belongs to the PLEKHD1 family.

In Homo sapiens (Human), this protein is Pleckstrin homology domain-containing family D member 1 (PLEKHD1).